A 659-amino-acid chain; its full sequence is Acetyl-coenzyme A synthetase (659 aa).

Residues 206–209 (RRGK) and T324 contribute to the CoA site. ATP is bound by residues 400 to 402 (GEP), 424 to 429 (DTWWQT), D516, R531, and R542. The Mg(2+) site is built by V553 and H555. Position 600 (R600) interacts with CoA.

The protein belongs to the ATP-dependent AMP-binding enzyme family. The cofactor is Mg(2+).

It catalyses the reaction acetate + ATP + CoA = acetyl-CoA + AMP + diphosphate. Its function is as follows. Catalyzes the conversion of acetate into acetyl-CoA (AcCoA), an essential intermediate at the junction of anabolic and catabolic pathways. AcsA undergoes a two-step reaction. In the first half reaction, AcsA combines acetate with ATP to form acetyl-adenylate (AcAMP) intermediate. In the second half reaction, it can then transfer the acetyl group from AcAMP to the sulfhydryl group of CoA, forming the product AcCoA. The chain is Acetyl-coenzyme A synthetase (acsA) from Methanothrix thermoacetophila (strain DSM 6194 / JCM 14653 / NBRC 101360 / PT) (Methanosaeta thermophila).